The following is a 289-amino-acid chain: Nodulation protein NolT (289 aa).

Residues 1–33 form the signal peptide; sequence MFGSAHGDTTSSDTSGRRPLRLVVLPLLLALSS. Cys-34 carries the N-palmitoyl cysteine lipid modification. Cys-34 is lipidated: S-diacylglycerol cysteine. Residues 233–253 traverse the membrane as a helical segment; it reads VAVGVGAAVFAVTCYLLFIVL.

It belongs to the YscJ lipoprotein family.

It localises to the cell outer membrane. Functionally, regulates cultivar-specific nodulation of soybean. This Rhizobium fredii (Sinorhizobium fredii) protein is Nodulation protein NolT (nolT).